A 508-amino-acid polypeptide reads, in one-letter code: MLWFQGAIPAAIATAKRSGAVFVVFVAGDDEQSTQMAASWEDDKVTEASSNSFVAIKIDTKSEACLQFSQIYPVVCVPSSFFIGDSGIPLEVIAGSVSADELVTRIHKVRQMHLLKSETSVANGSQSESSVSTPSASFEPNNTCENSQSRNAELCEIPPTSDTKSDTATGGESAGHATSSQEPSGCSDQRPAEDLNIRVERLTKKLEERREEKRKEEEQREIKKEIERRKTGKEMLDYKRKQEEELTKRMLEERNREKAEDRAARERIKQQIALDRAERAARFAKTKEEVEAAKAAALLAKQAEMEVKRESYARERSTVARIQFRLPDGSSFTNQFPSDAPLEEARQFAAQTVGNTYGNFSLATMFPRREFTKEDYKKKLLDLELAPSASVVLLPAGRPTASIVHSSSGDIWTLLGTVLYPFLAIWRLISNFLFSNPPPTQTSVRVTSSEPPNPASSSKSEKREPVRKRVLEKRGDDFKKEGKIYRLRTQDDGEDENNTWNGNSTQQM.

Residues 1–200 (MLWFQGAIPA…PAEDLNIRVE (200 aa)) are interaction with UBQLN1. Residues 1–413 (MLWFQGAIPA…VHSSSGDIWT (413 aa)) lie on the Cytoplasmic side of the membrane. 2 stretches are compositionally biased toward polar residues: residues 117 to 151 (SETS…QSRN) and 160 to 187 (TSDT…SGCS). The segment at 117–196 (SETSVANGSQ…SDQRPAEDLN (80 aa)) is disordered. The UBX domain maps to 315–393 (ERSTVARIQF…ELAPSASVVL (79 aa)). The stretch at 414 to 434 (LLGTVLYPFLAIWRLISNFLF) is an intramembrane region. Residues 435 to 508 (SNPPPTQTSV…TWNGNSTQQM (74 aa)) lie on the Cytoplasmic side of the membrane. The disordered stretch occupies residues 440–508 (TQTSVRVTSS…TWNGNSTQQM (69 aa)). Positions 441–458 (QTSVRVTSSEPPNPASSS) are enriched in polar residues. Residues 459–491 (KSEKREPVRKRVLEKRGDDFKKEGKIYRLRTQD) show a composition bias toward basic and acidic residues. A Phosphothreonine modification is found at Thr-489. Residues 498 to 508 (NTWNGNSTQQM) show a composition bias toward polar residues.

Directly interacts with VCP. Interacts with UBQLN1. Forms a complex with VCP and UBQLN1. In terms of tissue distribution, expressed in many tissues, including heart, brain, placenta, lung, liver, skeletal muscle, kidney and pancreas. Accumulates in Alzheimer disease-afflicted brains (at protein level).

It localises to the endoplasmic reticulum membrane. The protein localises to the nucleus envelope. Its function is as follows. Involved in endoplasmic reticulum-associated protein degradation (ERAD). Acts as a platform to recruit both UBQLN1 and VCP to the ER during ERAD. In Homo sapiens (Human), this protein is UBX domain-containing protein 4 (UBXN4).